The sequence spans 104 residues: uncharacterized protein (104 aa).

This is an uncharacterized protein from Orgyia pseudotsugata (Douglas-fir tussock moth).